Here is a 408-residue protein sequence, read N- to C-terminus: CinA-like protein (408 aa).

The protein belongs to the CinA family.

The chain is CinA-like protein from Anaeromyxobacter dehalogenans (strain 2CP-1 / ATCC BAA-258).